Reading from the N-terminus, the 338-residue chain is Glutamate/glutamine/aspartate/asparagine-binding protein BztA (338 aa).

The signal sequence occupies residues 1–22 (MKKSAFFGSVALAALVAGAASA).

The protein belongs to the bacterial solute-binding protein 3 family.

It localises to the periplasm. Its function is as follows. Part of a binding-protein-dependent transport system for glutamate, glutamine, aspartate and asparagine. This Rhodobacter capsulatus (strain ATCC BAA-309 / NBRC 16581 / SB1003) protein is Glutamate/glutamine/aspartate/asparagine-binding protein BztA (bztA).